We begin with the raw amino-acid sequence, 240 residues long: Keratinocyte-associated protein 3 (240 aa).

A run of 4 helical transmembrane segments spans residues 21–41 (VGLA…VLHG), 63–83 (VISV…LLAS), 94–114 (VLLA…LGLL), and 163–183 (ALAL…LSGY).

Belongs to the TMEM54 family. As to expression, expressed in skin, pancreas and keratinocytes.

It is found in the membrane. The polypeptide is Keratinocyte-associated protein 3 (KRTCAP3) (Homo sapiens (Human)).